A 129-amino-acid chain; its full sequence is Putative transmembrane protein 10 (129 aa).

The next 3 membrane-spanning stretches (helical) occupy residues 3-23 (NFSYFSTIFSIALMSSNAFAG), 27-47 (LLVGFCPCIEINTLTLFLSSL), and 85-105 (SSVLSCFTSCFVIYFYPFFVF).

The protein resides in the host membrane. The chain is Putative transmembrane protein 10 (SIFV0010) from Sulfolobus islandicus filamentous virus (isolate Iceland/Hveragerdi) (SIFV).